The chain runs to 147 residues: S-protein homolog 10 (147 aa).

A signal peptide spans 1 to 20 (MNCFSYFFLVIILCAGLNNA).

It belongs to the plant self-incompatibility (S1) protein family.

It localises to the secreted. This Arabidopsis thaliana (Mouse-ear cress) protein is S-protein homolog 10.